The chain runs to 129 residues: Putative transmembrane protein 10 (129 aa).

The next 3 membrane-spanning stretches (helical) occupy residues Asn3–Gly23, Leu27–Leu47, and Ser85–Phe105.

It localises to the host membrane. This Sulfolobus islandicus filamentous virus (isolate Iceland/Hveragerdi) (SIFV) protein is Putative transmembrane protein 10 (SIFV0010).